The chain runs to 378 residues: Erythronate-4-phosphate dehydrogenase (378 aa).

2 residues coordinate substrate: serine 45 and threonine 66. Aspartate 146 and threonine 175 together coordinate NAD(+). The active site involves arginine 208. Aspartate 232 lines the NAD(+) pocket. The active site involves glutamate 237. The active-site Proton donor is histidine 254. Glycine 257 lines the NAD(+) pocket. A substrate-binding site is contributed by tyrosine 258.

This sequence belongs to the D-isomer specific 2-hydroxyacid dehydrogenase family. PdxB subfamily. As to quaternary structure, homodimer.

The protein resides in the cytoplasm. It catalyses the reaction 4-phospho-D-erythronate + NAD(+) = (R)-3-hydroxy-2-oxo-4-phosphooxybutanoate + NADH + H(+). It participates in cofactor biosynthesis; pyridoxine 5'-phosphate biosynthesis; pyridoxine 5'-phosphate from D-erythrose 4-phosphate: step 2/5. Catalyzes the oxidation of erythronate-4-phosphate to 3-hydroxy-2-oxo-4-phosphonooxybutanoate. The sequence is that of Erythronate-4-phosphate dehydrogenase from Pectobacterium carotovorum subsp. carotovorum (strain PC1).